The primary structure comprises 622 residues: 1-deoxy-D-xylulose-5-phosphate synthase (622 aa).

Thiamine diphosphate contacts are provided by residues histidine 80 and 121–123; that span reads GHS. Aspartate 152 provides a ligand contact to Mg(2+). Residues 153-154, asparagine 181, tyrosine 288, and glutamate 369 each bind thiamine diphosphate; that span reads GA. Asparagine 181 is a binding site for Mg(2+).

Belongs to the transketolase family. DXPS subfamily. In terms of assembly, homodimer. Mg(2+) serves as cofactor. Thiamine diphosphate is required as a cofactor.

The enzyme catalyses D-glyceraldehyde 3-phosphate + pyruvate + H(+) = 1-deoxy-D-xylulose 5-phosphate + CO2. It participates in metabolic intermediate biosynthesis; 1-deoxy-D-xylulose 5-phosphate biosynthesis; 1-deoxy-D-xylulose 5-phosphate from D-glyceraldehyde 3-phosphate and pyruvate: step 1/1. Functionally, catalyzes the acyloin condensation reaction between C atoms 2 and 3 of pyruvate and glyceraldehyde 3-phosphate to yield 1-deoxy-D-xylulose-5-phosphate (DXP). The protein is 1-deoxy-D-xylulose-5-phosphate synthase of Psychromonas ingrahamii (strain DSM 17664 / CCUG 51855 / 37).